The following is a 787-amino-acid chain: Protein translocase subunit SecA (787 aa).

Residues Gln-85, 103–107 (GEGKT), and Asp-492 each bind ATP.

The protein belongs to the SecA family. Monomer and homodimer. Part of the essential Sec protein translocation apparatus which comprises SecA, SecYEG and auxiliary proteins SecDF. Other proteins may also be involved.

It localises to the cell membrane. The protein localises to the cytoplasm. It catalyses the reaction ATP + H2O + cellular proteinSide 1 = ADP + phosphate + cellular proteinSide 2.. Functionally, part of the Sec protein translocase complex. Interacts with the SecYEG preprotein conducting channel. Has a central role in coupling the hydrolysis of ATP to the transfer of proteins into and across the cell membrane, serving as an ATP-driven molecular motor driving the stepwise translocation of polypeptide chains across the membrane. The polypeptide is Protein translocase subunit SecA (Latilactobacillus sakei subsp. sakei (strain 23K) (Lactobacillus sakei subsp. sakei)).